Here is a 502-residue protein sequence, read N- to C-terminus: Alpha-ketoglutarate-dependent dioxygenase FTO (502 aa).

The interval 32–324 is fe2OG dioxygenase domain; the sequence is TPKDDEFYQQ…SSTHRVAECS (293 aa). Residues arginine 96 and tyrosine 108 each coordinate substrate. Residue asparagine 202 coordinates 2-oxoglutarate. Residues 210–221 are loop L1; predicted to block binding of double-stranded DNA or RNA; that stretch reads PYLKEEPYFGMG. Position 213 is an N6-acetyllysine (lysine 213). Residues histidine 228 and aspartate 230 each coordinate Fe cation. A substrate-binding site is contributed by 228-231; sequence HHDE. A 2-oxoglutarate-binding site is contributed by tyrosine 292. Histidine 304 contributes to the Fe cation binding site. Residues 313-315, threonine 317, and arginine 319 contribute to the 2-oxoglutarate site; that span reads RFS.

It belongs to the fto family. Monomer. May also exist as homodimer. It depends on Fe(2+) as a cofactor. In terms of tissue distribution, ubiquitous. Highly expressed in teeth and weakly in bone.

It localises to the nucleus. It is found in the nucleus speckle. Its subcellular location is the cytoplasm. It catalyses the reaction a 5'-end (N(7)-methyl 5'-triphosphoguanosine)-(N(6),2'-O-dimethyladenosine) in mRNA + 2-oxoglutarate + O2 = a 5'-end (N(7)-methyl 5'-triphosphoguanosine)-(2'-O-methyladenosine) in mRNA + formaldehyde + succinate + CO2. The enzyme catalyses an N(6)-methyladenosine in mRNA + 2-oxoglutarate + O2 = an adenosine in mRNA + formaldehyde + succinate + CO2. The catalysed reaction is N(6)-methyladenosine in U6 snRNA + 2-oxoglutarate + O2 = adenosine in U6 snRNA + formaldehyde + succinate + CO2. It carries out the reaction a 5'-end (N(7)-methyl 5'-triphosphoguanosine)-(N(6),2'-O-dimethyladenosine) in U6 snRNA + 2-oxoglutarate + O2 = a 5'-end (N(7)-methyl 5'-triphosphoguanosine)-(2'-O-methyladenosine) in U6 snRNA + formaldehyde + succinate + CO2. It catalyses the reaction an N(1)-methyladenosine in tRNA + 2-oxoglutarate + O2 = an adenosine in tRNA + formaldehyde + succinate + CO2. With respect to regulation, activated by ascorbate. Inhibited by N-oxalylglycine, fumarate and succinate. In terms of biological role, RNA demethylase that mediates oxidative demethylation of different RNA species, such as mRNAs, tRNAs and snRNAs, and acts as a regulator of fat mass, adipogenesis and energy homeostasis. Specifically demethylates N(6)-methyladenosine (m6A) RNA, the most prevalent internal modification of messenger RNA (mRNA) in higher eukaryotes. M6A demethylation by FTO affects mRNA expression and stability. Also able to demethylate m6A in U6 small nuclear RNA (snRNA). Mediates demethylation of N(6),2'-O-dimethyladenosine cap (m6A(m)), by demethylating the N(6)-methyladenosine at the second transcribed position of mRNAs and U6 snRNA. Demethylation of m6A(m) in the 5'-cap by FTO affects mRNA stability by promoting susceptibility to decapping. Also acts as a tRNA demethylase by removing N(1)-methyladenine from various tRNAs. Has no activity towards 1-methylguanine. Has no detectable activity towards double-stranded DNA. Also able to repair alkylated DNA and RNA by oxidative demethylation: demethylates single-stranded RNA containing 3-methyluracil, single-stranded DNA containing 3-methylthymine and has low demethylase activity towards single-stranded DNA containing 1-methyladenine or 3-methylcytosine. Ability to repair alkylated DNA and RNA is however unsure in vivo. Involved in the regulation of fat mass, adipogenesis and body weight, thereby contributing to the regulation of body size and body fat accumulation. Involved in the regulation of thermogenesis and the control of adipocyte differentiation into brown or white fat cells. Regulates activity of the dopaminergic midbrain circuitry via its ability to demethylate m6A in mRNAs. The chain is Alpha-ketoglutarate-dependent dioxygenase FTO from Rattus norvegicus (Rat).